A 537-amino-acid polypeptide reads, in one-letter code: Exodeoxyribonuclease 7 large subunit (537 aa).

A disordered region spans residues 508 to 537; sequence GEGAPVEPPQAARPSKGARTKAAQPSLFDD.

It belongs to the XseA family. In terms of assembly, heterooligomer composed of large and small subunits.

Its subcellular location is the cytoplasm. It catalyses the reaction Exonucleolytic cleavage in either 5'- to 3'- or 3'- to 5'-direction to yield nucleoside 5'-phosphates.. In terms of biological role, bidirectionally degrades single-stranded DNA into large acid-insoluble oligonucleotides, which are then degraded further into small acid-soluble oligonucleotides. This is Exodeoxyribonuclease 7 large subunit from Azorhizobium caulinodans (strain ATCC 43989 / DSM 5975 / JCM 20966 / LMG 6465 / NBRC 14845 / NCIMB 13405 / ORS 571).